The primary structure comprises 313 residues: MTVSEFPDTQDKQPSIPISLTRVGVTGVKKLIKIKREDKRPIILIPTFDAFVDLPSTQKGVHMSRNPEAISEIVDEAANQSEIHLENICANLVKRLLEKHEYALHAETEARGEYIINKLSPVSKRKTQETTHIIARAIAMKDDEGNISVRKMIGAEVIGMTVCPCAQESVEKDSKDKLLEFLDEETTQKVLDVVTFASHNQRGVGTILLEVPEKQDVNVDDLIKIIQDAMSSPVCEILKRPDENRIVTNAHQNPVFVEDCVRNMVIGLLEKYPNLPDDSVVTIKQVNQESIHQHNAYAEKVASFGKLREENKE.

It belongs to the GTP cyclohydrolase IV family. As to quaternary structure, homodimer. Fe(2+) is required as a cofactor.

The enzyme catalyses GTP + H2O = 7,8-dihydroneopterin 2',3'-cyclic phosphate + formate + diphosphate + H(+). It participates in cofactor biosynthesis; 5,6,7,8-tetrahydromethanopterin biosynthesis. In terms of biological role, converts GTP to 7,8-dihydro-D-neopterin 2',3'-cyclic phosphate, the first intermediate in the biosynthesis of coenzyme methanopterin. In Methanosphaera stadtmanae (strain ATCC 43021 / DSM 3091 / JCM 11832 / MCB-3), this protein is GTP cyclohydrolase MptA.